The sequence spans 535 residues: Alpha-1,3-mannosyl-glycoprotein 4-beta-N-acetylglucosaminyltransferase A (535 aa).

The Cytoplasmic portion of the chain corresponds to 1–4 (MRLR). Residues 5–27 (NGTVATALAFITSFLTLSWYTTW) traverse the membrane as a helical; Signal-anchor for type II membrane protein segment. Positions 28–63 (QNGKEKLIAYQREFLALKERLRIAEHRISQRSSELN) form a coiled coil. Residues 28 to 535 (QNGKEKLIAY…NEIHIKKATN (508 aa)) lie on the Lumenal side of the membrane. N-linked (GlcNAc...) asparagine glycosylation is found at N77 and N458. S474 carries the phosphoserine modification.

The protein belongs to the glycosyltransferase 54 family. A divalent metal cation serves as cofactor. In terms of processing, N-glycosylated.

It is found in the golgi apparatus membrane. The protein resides in the secreted. It catalyses the reaction N(4)-{beta-D-GlcNAc-(1-&gt;2)-alpha-D-Man-(1-&gt;3)-[beta-D-GlcNAc-(1-&gt;2)-alpha-D-Man-(1-&gt;6)]-beta-D-Man-(1-&gt;4)-beta-D-GlcNAc-(1-&gt;4)-beta-D-GlcNAc}-L-asparaginyl-[protein] + UDP-N-acetyl-alpha-D-glucosamine = N(4)-{beta-D-GlcNAc-(1-&gt;2)-[beta-D-GlcNAc-(1-&gt;4)]-alpha-D-Man-(1-&gt;3)-[beta-D-GlcNAc-(1-&gt;2)-alpha-D-Man-(1-&gt;6)]-beta-D-Man-(1-&gt;4)-beta-D-GlcNAc-(1-&gt;4)-beta-D-GlcNAc}-L-asparaginyl-[protein] + UDP + H(+). It carries out the reaction an N(4)-{beta-D-GlcNAc-(1-&gt;2)-alpha-D-Man-(1-&gt;3)-[alpha-D-Man-(1-&gt;6)]-beta-D-Man-(1-&gt;4)-beta-D-GlcNAc-(1-&gt;4)-beta-D-GlcNAc}-L-asparaginyl-[protein] + UDP-N-acetyl-alpha-D-glucosamine = an N(4)-{beta-D-GlcNAc-(1-&gt;2)-[beta-D-GlcNAc-(1-&gt;4)]-alpha-D-Man-(1-&gt;3)-[alpha-D-Man-(1-&gt;6)]-beta-D-Man-(1-&gt;4)-beta-D-GlcNAc-(1-&gt;4)-beta-D-GlcNAc}-L-asparaginyl-[protein] + UDP + H(+). The enzyme catalyses an N(4)-{beta-D-GlcNAc-(1-&gt;2)-alpha-D-Man-(1-&gt;3)-[beta-D-GlcNAc-(1-&gt;2)-[beta-D-GlcNAc-(1-&gt;6)]-alpha-D-Man-(1-&gt;6)]-beta-D-Man-(1-&gt;4)-beta-D-GlcNAc-(1-&gt;4)-beta-D-GlcNAc}-L-asparaginyl-[protein] + UDP-N-acetyl-alpha-D-glucosamine = an N(4)-{beta-D-GlcNAc-(1-&gt;2)-[beta-D-GlcNAc-(1-&gt;4)]-alpha-D-Man-(1-&gt;3)-[beta-D-GlcNAc-(1-&gt;2)-[beta-D-GlcNAc-(1-&gt;6)]-alpha-D-Man-(1-&gt;6)]-beta-D-Man-(1-&gt;4)-beta-D-GlcNAc-(1-&gt;4)-beta-D-GlcNAc}-L-asparaginyl-[protein] + UDP + H(+). The catalysed reaction is an N(4)-{beta-D-GlcNAc-(1-&gt;2)-alpha-D-Man-(1-&gt;3)-[beta-D-GlcNAc-(1-&gt;2)-alpha-D-Man-(1-&gt;6)]-beta-D-Man-(1-&gt;4)-beta-D-GlcNAc-(1-&gt;4)-[alpha-L-Fuc-(1-&gt;6)]-beta-D-GlcNAc}-L-asparaginyl-[protein] + UDP-N-acetyl-alpha-D-glucosamine = N(4)-{beta-D-GlcNAc-(1-&gt;2)-[beta-D-GlcNAc-(1-&gt;4)]-alpha-D-Man-(1-&gt;3)-[beta-D-GlcNAc-(1-&gt;2)-alpha-D-Man-(1-&gt;6)]-beta-D-Man-(1-&gt;4)-beta-D-GlcNAc-(1-&gt;4)-[alpha-L-Fuc-(1-&gt;6)]-beta-D-GlcNAc}-asparaginyl-[protein] + UDP + H(+). It catalyses the reaction an N(4)-{beta-D-GlcNAc-(1-&gt;2)-alpha-D-Man-(1-&gt;3)-[beta-D-Gal-(1-&gt;4)-beta-D-GlcNAc-(1-&gt;2)-alpha-D-Man-(1-&gt;6)]-beta-D-Man-(1-&gt;4)-beta-D-GlcNAc-(1-&gt;4)-beta-D-GlcNAc}-L-asparaginyl-[protein] + UDP-N-acetyl-alpha-D-glucosamine = an N(4)-{beta-D-GlcNAc-(1-&gt;2)-[beta-D-GlcNAc-(1-&gt;4)]-alpha-D-Man-(1-&gt;3)-[beta-D-Gal-(1-&gt;4)-beta-D-GlcNAc-(1-&gt;2)-alpha-D-Man-(1-&gt;6)]-beta-D-Man-(1-&gt;4)-beta-D-GlcNAc-(1-&gt;4)-beta-D-GlcNAc}-L-asparaginyl-[protein] + UDP + H(+). It carries out the reaction N(4)-{beta-D-GlcNAc-(1-&gt;2)-alpha-D-Man-(1-&gt;3)-[alpha-D-Man-(1-&gt;3)-{alpha-D-Man-(1-&gt;6)}-alpha-D-Man-(1-&gt;6)]-beta-D-Man-(1-&gt;4)-beta-D-GlcNAc-(1-&gt;4)-beta-D-GlcNAc}-asparaginyl-[protein] + UDP-N-acetyl-alpha-D-glucosamine = N(4)-{beta-D-GlcNAc-(1-&gt;2)-[beta-D-GlcNAc-(1-&gt;4)]-alpha-D-Man-(1-&gt;3)-[alpha-D-Man-(1-&gt;3)-{alpha-D-Man-(1-&gt;6)}-alpha-D-Man-(1-&gt;6)]-beta-D-Man-(1-&gt;4)-beta-D-GlcNAc-(1-&gt;4)-beta-D-GlcNAc}-asparaginyl-[protein] + UDP + H(+). The enzyme catalyses N(4)-{beta-D-GlcNAc-(1-&gt;2)-alpha-D-Man-(1-&gt;3)-beta-D-Man-(1-&gt;4)-beta-D-GlcNAc-(1-&gt;4)-beta-D-GlcNAc}-asparaginyl-[protein] + UDP-N-acetyl-alpha-D-glucosamine = N(4)-{beta-D-GlcNAc-(1-&gt;2)-[beta-D-GlcNAc-(1-&gt;4)]-alpha-D-Man-(1-&gt;3)-beta-D-Man-(1-&gt;4)-beta-D-GlcNAc-(1-&gt;4)-beta-D-GlcNAc}-asparaginyl-[protein] + UDP + H(+). It participates in protein modification; protein glycosylation. Inhibited by UDP. Its function is as follows. Glycosyltransferase that catalyze the transfer of GlcNAc from UDP-GlcNAc to the GlcNAcbeta1-2Manalpha1-3 arm of the core structure of N-linked glycans through a beta1-4 linkage and participates in the production of tri- and tetra-antennary N-linked sugar chains. Involved in glucose transport by mediating SLC2A2/GLUT2 glycosylation, thereby controlling cell-surface expression of SLC2A2 in pancreatic beta cells. In Pongo abelii (Sumatran orangutan), this protein is Alpha-1,3-mannosyl-glycoprotein 4-beta-N-acetylglucosaminyltransferase A.